The sequence spans 205 residues: Ribosome maturation factor RimP (205 aa).

Positions 1 to 12 (MSNAEAQASSDH) are enriched in polar residues. Disordered regions lie at residues 1 to 24 (MSNA…APAH) and 186 to 205 (FSHL…SEEA).

The protein belongs to the RimP family.

It is found in the cytoplasm. In terms of biological role, required for maturation of 30S ribosomal subunits. This is Ribosome maturation factor RimP from Pseudarthrobacter chlorophenolicus (strain ATCC 700700 / DSM 12829 / CIP 107037 / JCM 12360 / KCTC 9906 / NCIMB 13794 / A6) (Arthrobacter chlorophenolicus).